Reading from the N-terminus, the 42-residue chain is Photosystem I reaction center subunit IX (42 aa).

The chain crosses the membrane as a helical span at residues 7-27; sequence YLSVAPVLATLWFGSLAGLLI.

Belongs to the PsaJ family.

It localises to the plastid. The protein localises to the chloroplast thylakoid membrane. In terms of biological role, may help in the organization of the PsaE and PsaF subunits. This Chloranthus spicatus (Chulantree) protein is Photosystem I reaction center subunit IX.